The chain runs to 367 residues: UDP-N-acetylglucosamine--N-acetylmuramyl-(pentapeptide) pyrophosphoryl-undecaprenol N-acetylglucosamine transferase (367 aa).

Residues 15-17 (TGG), asparagine 127, arginine 163, serine 191, isoleucine 249, and glutamine 294 contribute to the UDP-N-acetyl-alpha-D-glucosamine site.

This sequence belongs to the glycosyltransferase 28 family. MurG subfamily.

It is found in the cell inner membrane. The catalysed reaction is di-trans,octa-cis-undecaprenyl diphospho-N-acetyl-alpha-D-muramoyl-L-alanyl-D-glutamyl-meso-2,6-diaminopimeloyl-D-alanyl-D-alanine + UDP-N-acetyl-alpha-D-glucosamine = di-trans,octa-cis-undecaprenyl diphospho-[N-acetyl-alpha-D-glucosaminyl-(1-&gt;4)]-N-acetyl-alpha-D-muramoyl-L-alanyl-D-glutamyl-meso-2,6-diaminopimeloyl-D-alanyl-D-alanine + UDP + H(+). It participates in cell wall biogenesis; peptidoglycan biosynthesis. Its function is as follows. Cell wall formation. Catalyzes the transfer of a GlcNAc subunit on undecaprenyl-pyrophosphoryl-MurNAc-pentapeptide (lipid intermediate I) to form undecaprenyl-pyrophosphoryl-MurNAc-(pentapeptide)GlcNAc (lipid intermediate II). The polypeptide is UDP-N-acetylglucosamine--N-acetylmuramyl-(pentapeptide) pyrophosphoryl-undecaprenol N-acetylglucosamine transferase (Burkholderia lata (strain ATCC 17760 / DSM 23089 / LMG 22485 / NCIMB 9086 / R18194 / 383)).